We begin with the raw amino-acid sequence, 359 residues long: Phospho-N-acetylmuramoyl-pentapeptide-transferase (359 aa).

The next 10 helical transmembrane spans lie at 3-23, 55-75, 84-104, 120-140, 156-176, 187-207, 231-251, 255-275, 280-300, and 334-354; these read QILI…PVLI, VAIL…GLAL, GLLV…DDLI, TVGI…FGNA, IATV…LVSA, LDGL…LITF, LALV…WNAA, IFMG…LSVT, ILAV…VVQI, and FWLL…GEWL.

Belongs to the glycosyltransferase 4 family. MraY subfamily. The cofactor is Mg(2+).

It localises to the cell membrane. It catalyses the reaction UDP-N-acetyl-alpha-D-muramoyl-L-alanyl-gamma-D-glutamyl-meso-2,6-diaminopimeloyl-D-alanyl-D-alanine + di-trans,octa-cis-undecaprenyl phosphate = di-trans,octa-cis-undecaprenyl diphospho-N-acetyl-alpha-D-muramoyl-L-alanyl-D-glutamyl-meso-2,6-diaminopimeloyl-D-alanyl-D-alanine + UMP. It functions in the pathway cell wall biogenesis; peptidoglycan biosynthesis. Catalyzes the initial step of the lipid cycle reactions in the biosynthesis of the cell wall peptidoglycan: transfers peptidoglycan precursor phospho-MurNAc-pentapeptide from UDP-MurNAc-pentapeptide onto the lipid carrier undecaprenyl phosphate, yielding undecaprenyl-pyrophosphoryl-MurNAc-pentapeptide, known as lipid I. In Mycobacterium sp. (strain MCS), this protein is Phospho-N-acetylmuramoyl-pentapeptide-transferase.